The sequence spans 250 residues: Leucyl/phenylalanyl-tRNA--protein transferase (250 aa).

Belongs to the L/F-transferase family.

It is found in the cytoplasm. The enzyme catalyses N-terminal L-lysyl-[protein] + L-leucyl-tRNA(Leu) = N-terminal L-leucyl-L-lysyl-[protein] + tRNA(Leu) + H(+). It carries out the reaction N-terminal L-arginyl-[protein] + L-leucyl-tRNA(Leu) = N-terminal L-leucyl-L-arginyl-[protein] + tRNA(Leu) + H(+). The catalysed reaction is L-phenylalanyl-tRNA(Phe) + an N-terminal L-alpha-aminoacyl-[protein] = an N-terminal L-phenylalanyl-L-alpha-aminoacyl-[protein] + tRNA(Phe). Its function is as follows. Functions in the N-end rule pathway of protein degradation where it conjugates Leu, Phe and, less efficiently, Met from aminoacyl-tRNAs to the N-termini of proteins containing an N-terminal arginine or lysine. This is Leucyl/phenylalanyl-tRNA--protein transferase from Cupriavidus necator (strain ATCC 17699 / DSM 428 / KCTC 22496 / NCIMB 10442 / H16 / Stanier 337) (Ralstonia eutropha).